Consider the following 317-residue polypeptide: Lipoyl synthase (317 aa).

Positions methionine 1–proline 28 are disordered. Cysteine 64, cysteine 69, cysteine 75, cysteine 90, cysteine 94, cysteine 97, and serine 304 together coordinate [4Fe-4S] cluster. A Radical SAM core domain is found at phenylalanine 76–arginine 293.

The protein belongs to the radical SAM superfamily. Lipoyl synthase family. [4Fe-4S] cluster is required as a cofactor.

Its subcellular location is the cytoplasm. The catalysed reaction is [[Fe-S] cluster scaffold protein carrying a second [4Fe-4S](2+) cluster] + N(6)-octanoyl-L-lysyl-[protein] + 2 oxidized [2Fe-2S]-[ferredoxin] + 2 S-adenosyl-L-methionine + 4 H(+) = [[Fe-S] cluster scaffold protein] + N(6)-[(R)-dihydrolipoyl]-L-lysyl-[protein] + 4 Fe(3+) + 2 hydrogen sulfide + 2 5'-deoxyadenosine + 2 L-methionine + 2 reduced [2Fe-2S]-[ferredoxin]. It functions in the pathway protein modification; protein lipoylation via endogenous pathway; protein N(6)-(lipoyl)lysine from octanoyl-[acyl-carrier-protein]: step 2/2. Catalyzes the radical-mediated insertion of two sulfur atoms into the C-6 and C-8 positions of the octanoyl moiety bound to the lipoyl domains of lipoate-dependent enzymes, thereby converting the octanoylated domains into lipoylated derivatives. The protein is Lipoyl synthase of Acidithiobacillus ferrooxidans (strain ATCC 23270 / DSM 14882 / CIP 104768 / NCIMB 8455) (Ferrobacillus ferrooxidans (strain ATCC 23270)).